Consider the following 355-residue polypeptide: Guanine nucleotide-binding protein alpha-12 subunit (355 aa).

One can recognise a G-alpha domain in the interval 28 to 355 (RQINLLLLGS…EQNLKTLMMQ (328 aa)). Residues 31–44 (NLLLLGSGESGKST) form a G1 motif region. GTP contacts are provided by residues 36 to 43 (GSGESGKS), 176 to 182 (LFCRKAT), 201 to 205 (DVGGQ), 270 to 273 (NKND), and alanine 327. Mg(2+)-binding residues include serine 43 and threonine 182. Positions 174-182 (DILFCRKAT) are G2 motif. A G3 motif region spans residues 197 to 206 (FRFIDVGGQR). The G4 motif stretch occupies residues 266–273 (ILFMNKND). The G5 motif stretch occupies residues 325 to 330 (TTAVDT).

Belongs to the G-alpha family. In terms of assembly, g proteins are composed of 3 units; alpha, beta and gamma. The alpha chain contains the guanine nucleotide binding site.

Its function is as follows. Guanine nucleotide-binding proteins (G proteins) are involved as modulators or transducers in various transmembrane signaling systems. May play a role in resistance to fungal infection in the epidermis by regulating the up-regulation of several antimicrobial peptides of the NLP and CNC families. Upstream of plc-3, tpa-1 and the p38-like pathway, required for the expression of antimicrobial peptide nlp-29 in the epidermis in response to fungal infection or physical injury. The protein is Guanine nucleotide-binding protein alpha-12 subunit (gpa-12) of Caenorhabditis elegans.